We begin with the raw amino-acid sequence, 213 residues long: Receptor-binding cancer antigen expressed on SiSo cells (213 aa).

Topologically, residues 1–6 (MAITQF) are extracellular. A helical; Signal-anchor for type III membrane protein membrane pass occupies residues 7–27 (RLFKVCTCLATVLSFLKRLIC). The Cytoplasmic portion of the chain corresponds to 28–213 (RSGRGRKLSG…EQNKMGVKLS (186 aa)). Serine 36 carries the post-translational modification Phosphoserine. Phosphothreonine is present on threonine 41. A Phosphotyrosine modification is found at tyrosine 94. A coiled-coil region spans residues 168–209 (QAEEVLRQQKIADREKRAAEQQRKKMEKEAQRLLKKEQNKMG). The span at 179 to 206 (ADREKRAAEQQRKKMEKEAQRLLKKEQN) shows a compositional bias: basic and acidic residues. The disordered stretch occupies residues 179–213 (ADREKRAAEQQRKKMEKEAQRLLKKEQNKMGVKLS).

As to quaternary structure, homodimer.

It localises to the golgi apparatus membrane. Its function is as follows. May participate in suppression of cell proliferation and induces apoptotic cell death through activation of interleukin-1-beta converting enzyme (ICE)-like proteases. The chain is Receptor-binding cancer antigen expressed on SiSo cells (Ebag9) from Rattus norvegicus (Rat).